The primary structure comprises 180 residues: ATP synthase subunit delta (180 aa).

Belongs to the ATPase delta chain family. As to quaternary structure, F-type ATPases have 2 components, F(1) - the catalytic core - and F(0) - the membrane proton channel. F(1) has five subunits: alpha(3), beta(3), gamma(1), delta(1), epsilon(1). F(0) has three main subunits: a(1), b(2) and c(10-14). The alpha and beta chains form an alternating ring which encloses part of the gamma chain. F(1) is attached to F(0) by a central stalk formed by the gamma and epsilon chains, while a peripheral stalk is formed by the delta and b chains.

Its subcellular location is the cell membrane. F(1)F(0) ATP synthase produces ATP from ADP in the presence of a proton or sodium gradient. F-type ATPases consist of two structural domains, F(1) containing the extramembraneous catalytic core and F(0) containing the membrane proton channel, linked together by a central stalk and a peripheral stalk. During catalysis, ATP synthesis in the catalytic domain of F(1) is coupled via a rotary mechanism of the central stalk subunits to proton translocation. Its function is as follows. This protein is part of the stalk that links CF(0) to CF(1). It either transmits conformational changes from CF(0) to CF(1) or is implicated in proton conduction. In Ligilactobacillus salivarius (strain UCC118) (Lactobacillus salivarius), this protein is ATP synthase subunit delta.